The chain runs to 132 residues: uncharacterized protein (132 aa).

A BIG2 domain is found at 45–115 (VHMEKHKLKI…VVIVTTAEGK (71 aa)).

This sequence to B.anthracis BA1245.

This is an uncharacterized protein from Bacillus cereus (strain ATCC 14579 / DSM 31 / CCUG 7414 / JCM 2152 / NBRC 15305 / NCIMB 9373 / NCTC 2599 / NRRL B-3711).